Reading from the N-terminus, the 512-residue chain is tRNA-2-methylthio-N(6)-dimethylallyladenosine synthase (512 aa).

Positions 23-139 (RTYQVRTYGC…LPTLLERARH (117 aa)) constitute an MTTase N-terminal domain. [4Fe-4S] cluster contacts are provided by C32, C68, C102, C176, C180, and C183. The Radical SAM core domain maps to 162 to 398 (RESAYAAWVS…IELQERISLE (237 aa)). Residues 401 to 469 (REQVGRAVEL…PHHLIADAPI (69 aa)) form the TRAM domain. Positions 477 to 512 (AGDAHAAGQKPRTGVGLGMPRIGAPAPSATAEGCGC) are disordered.

It belongs to the methylthiotransferase family. MiaB subfamily. Monomer. Requires [4Fe-4S] cluster as cofactor.

The protein localises to the cytoplasm. The catalysed reaction is N(6)-dimethylallyladenosine(37) in tRNA + (sulfur carrier)-SH + AH2 + 2 S-adenosyl-L-methionine = 2-methylsulfanyl-N(6)-dimethylallyladenosine(37) in tRNA + (sulfur carrier)-H + 5'-deoxyadenosine + L-methionine + A + S-adenosyl-L-homocysteine + 2 H(+). Catalyzes the methylthiolation of N6-(dimethylallyl)adenosine (i(6)A), leading to the formation of 2-methylthio-N6-(dimethylallyl)adenosine (ms(2)i(6)A) at position 37 in tRNAs that read codons beginning with uridine. The polypeptide is tRNA-2-methylthio-N(6)-dimethylallyladenosine synthase (Mycolicibacterium smegmatis (strain ATCC 700084 / mc(2)155) (Mycobacterium smegmatis)).